Here is a 333-residue protein sequence, read N- to C-terminus: DNA-directed RNA polymerase subunit alpha (333 aa).

The tract at residues 1-233 (MVREKVKVST…NLFIPFLHVE (233 aa)) is alpha N-terminal domain (alpha-NTD). The tract at residues 267 to 333 (LVFQYIFIDQ…LEKNRKFISN (67 aa)) is alpha C-terminal domain (alpha-CTD).

It belongs to the RNA polymerase alpha chain family. In plastids the minimal PEP RNA polymerase catalytic core is composed of four subunits: alpha, beta, beta', and beta''. When a (nuclear-encoded) sigma factor is associated with the core the holoenzyme is formed, which can initiate transcription.

The protein resides in the plastid. It is found in the chloroplast. The enzyme catalyses RNA(n) + a ribonucleoside 5'-triphosphate = RNA(n+1) + diphosphate. DNA-dependent RNA polymerase catalyzes the transcription of DNA into RNA using the four ribonucleoside triphosphates as substrates. The protein is DNA-directed RNA polymerase subunit alpha of Aethionema grandiflorum (Persian stone-cress).